The chain runs to 102 residues: Small ribosomal subunit protein uS10 (102 aa).

It belongs to the universal ribosomal protein uS10 family. In terms of assembly, part of the 30S ribosomal subunit.

In terms of biological role, involved in the binding of tRNA to the ribosomes. The chain is Small ribosomal subunit protein uS10 from Desulfitobacterium hafniense (strain DSM 10664 / DCB-2).